A 541-amino-acid polypeptide reads, in one-letter code: Glucose-6-phosphate isomerase (541 aa).

E346 acts as the Proton donor in catalysis. Catalysis depends on residues H377 and K506.

The protein belongs to the GPI family.

Its subcellular location is the cytoplasm. The catalysed reaction is alpha-D-glucose 6-phosphate = beta-D-fructose 6-phosphate. It functions in the pathway carbohydrate biosynthesis; gluconeogenesis. The protein operates within carbohydrate degradation; glycolysis; D-glyceraldehyde 3-phosphate and glycerone phosphate from D-glucose: step 2/4. Catalyzes the reversible isomerization of glucose-6-phosphate to fructose-6-phosphate. The sequence is that of Glucose-6-phosphate isomerase from Rhizobium meliloti (strain 1021) (Ensifer meliloti).